Consider the following 351-residue polypeptide: Protein MGF 360-2L (351 aa).

The protein belongs to the asfivirus MGF 360 family.

In terms of biological role, plays a role in virus cell tropism, and may be required for efficient virus replication in macrophages. The polypeptide is Protein MGF 360-2L (African swine fever virus (isolate Tick/South Africa/Pretoriuskop Pr4/1996) (ASFV)).